The sequence spans 1071 residues: Carbamoyl phosphate synthase large chain (1071 aa).

Residues M1–D399 form a carboxyphosphate synthetic domain region. ATP contacts are provided by R129, R169, G175, G176, E208, V210, E215, G241, V242, H243, Q284, and E296. One can recognise an ATP-grasp 1 domain in the interval K133–I325. Mg(2+)-binding residues include Q284, E296, and N298. Q284, E296, and N298 together coordinate Mn(2+). Positions I400–T540 are oligomerization domain. The segment at N541–V932 is carbamoyl phosphate synthetic domain. Residues Y673–A864 form the ATP-grasp 2 domain. R709, D748, L750, E755, G780, V781, H782, S783, Q823, and E835 together coordinate ATP. 3 residues coordinate Mg(2+): Q823, E835, and N837. The Mn(2+) site is built by Q823, E835, and N837. The MGS-like domain occupies N931–N1071. Residues L933 to N1071 are allosteric domain.

The protein belongs to the CarB family. Composed of two chains; the small (or glutamine) chain promotes the hydrolysis of glutamine to ammonia, which is used by the large (or ammonia) chain to synthesize carbamoyl phosphate. Tetramer of heterodimers (alpha,beta)4. It depends on Mg(2+) as a cofactor. Mn(2+) is required as a cofactor.

The catalysed reaction is hydrogencarbonate + L-glutamine + 2 ATP + H2O = carbamoyl phosphate + L-glutamate + 2 ADP + phosphate + 2 H(+). It catalyses the reaction hydrogencarbonate + NH4(+) + 2 ATP = carbamoyl phosphate + 2 ADP + phosphate + 2 H(+). It functions in the pathway amino-acid biosynthesis; L-arginine biosynthesis; carbamoyl phosphate from bicarbonate: step 1/1. It participates in pyrimidine metabolism; UMP biosynthesis via de novo pathway; (S)-dihydroorotate from bicarbonate: step 1/3. Its function is as follows. Large subunit of the glutamine-dependent carbamoyl phosphate synthetase (CPSase). CPSase catalyzes the formation of carbamoyl phosphate from the ammonia moiety of glutamine, carbonate, and phosphate donated by ATP, constituting the first step of 2 biosynthetic pathways, one leading to arginine and/or urea and the other to pyrimidine nucleotides. The large subunit (synthetase) binds the substrates ammonia (free or transferred from glutamine from the small subunit), hydrogencarbonate and ATP and carries out an ATP-coupled ligase reaction, activating hydrogencarbonate by forming carboxy phosphate which reacts with ammonia to form carbamoyl phosphate. This chain is Carbamoyl phosphate synthase large chain, found in Methanosarcina barkeri (strain Fusaro / DSM 804).